A 458-amino-acid chain; its full sequence is Tol-Pal system protein TolB (458 aa).

The first 23 residues, 1–23, serve as a signal peptide directing secretion; the sequence is MSSVIRKWALTALMAVSSTALFA.

Belongs to the TolB family. As to quaternary structure, the Tol-Pal system is composed of five core proteins: the inner membrane proteins TolA, TolQ and TolR, the periplasmic protein TolB and the outer membrane protein Pal. They form a network linking the inner and outer membranes and the peptidoglycan layer.

It is found in the periplasm. In terms of biological role, part of the Tol-Pal system, which plays a role in outer membrane invagination during cell division and is important for maintaining outer membrane integrity. The protein is Tol-Pal system protein TolB of Zymomonas mobilis subsp. mobilis (strain ATCC 31821 / ZM4 / CP4).